The sequence spans 556 residues: MFDAIDAALADIKAGKAVVVVDDENRENEGDLICAAQFATPALVNFMAVEARGLICLAMTGDRLDELDLPLMVSKNTDSNQTAFTVSIDAAPHLGVTTGISAEDRARTIQIAINPVTRPEDLSRPGHIFPLRAKTGGVLKRAGHTEAAVDLSRLAGLYPAGVICEIQNADGSMARLPELVEYARKYDLKLISIADLISYRLQHDRFVQRETICEFPSQFGEFKLYAYRNLLDQTEHIAIVKGDPSEFGQQPVMVRMHSECLTGDALGSLRCDCRMQLQAALKMLENHGLGVVVYLRQEGRGIGLVNKLKAYSLQDLGYDTVEANERLGFPADLRDYGMGAQMLNDLGVKQIRLITNNPRKIAGLKGYGLEIVERVPLLIEANDYNSHYLTTKAEKLGHWLVKNYLLAIAIKFTPNVASAQQRYEKLEKIRALLQGTPLMVHEDNRPVAIALFGKNSLIFHVGLDQNLPSGQPWQKHDHSPYPALVKDFLVQLKQWPDLQALAFLIAQGKDPMETLQVSLDRENVSFADLTADALNQWQPQTVYTYSKQGSGEMTNR.

The interval 1 to 202 (MFDAIDAALA…IADLISYRLQ (202 aa)) is DHBP synthase. Residues 26 to 27 (RE), Asp-31, 141 to 145 (RAGHT), and Glu-165 contribute to the D-ribulose 5-phosphate site. Glu-27 serves as a coordination point for Mg(2+). Mg(2+) is bound at residue His-144. The tract at residues 203–402 (HDRFVQRETI…AEKLGHWLVK (200 aa)) is GTP cyclohydrolase II. 255–259 (RMHSE) lines the GTP pocket. Residues Cys-260, Cys-271, and Cys-273 each coordinate Zn(2+). GTP contacts are provided by residues Gln-276, 298 to 300 (EGR), and Thr-320. Catalysis depends on Asp-332, which acts as the Proton acceptor; for GTP cyclohydrolase activity. Arg-334 acts as the Nucleophile; for GTP cyclohydrolase activity in catalysis. Residues Thr-355 and Lys-360 each coordinate GTP. The unknown stretch occupies residues 403 to 556 (NYLLAIAIKF…KQGSGEMTNR (154 aa)).

It in the N-terminal section; belongs to the DHBP synthase family. This sequence in the central section; belongs to the GTP cyclohydrolase II family. Mg(2+) is required as a cofactor. The cofactor is Mn(2+). Zn(2+) serves as cofactor.

The enzyme catalyses D-ribulose 5-phosphate = (2S)-2-hydroxy-3-oxobutyl phosphate + formate + H(+). It catalyses the reaction GTP + 4 H2O = 2,5-diamino-6-hydroxy-4-(5-phosphoribosylamino)-pyrimidine + formate + 2 phosphate + 3 H(+). It functions in the pathway cofactor biosynthesis; riboflavin biosynthesis; 2-hydroxy-3-oxobutyl phosphate from D-ribulose 5-phosphate: step 1/1. Its pathway is cofactor biosynthesis; riboflavin biosynthesis; 5-amino-6-(D-ribitylamino)uracil from GTP: step 1/4. Functionally, catalyzes the conversion of D-ribulose 5-phosphate to formate and 3,4-dihydroxy-2-butanone 4-phosphate. Catalyzes the conversion of GTP to 2,5-diamino-6-ribosylamino-4(3H)-pyrimidinone 5'-phosphate (DARP), formate and pyrophosphate. The chain is Riboflavin biosynthesis protein RibBA (ribBA) from Synechocystis sp. (strain ATCC 27184 / PCC 6803 / Kazusa).